Reading from the N-terminus, the 536-residue chain is Carboxypeptidase Y homolog A (536 aa).

Positions 1-17 are cleaved as a signal peptide; sequence MKFFTTGLLATAALAAA. The propeptide occupies 18-124; that stretch reads QEQQVLQAED…KLHNYDLRVK (107 aa). 5 disulfides stabilise this stretch: cysteine 172–cysteine 412, cysteine 306–cysteine 320, cysteine 330–cysteine 353, cysteine 337–cysteine 346, and cysteine 375–cysteine 382. N-linked (GlcNAc...) asparagine glycosylation is present at asparagine 203. The active site involves serine 259. Aspartate 451 is an active-site residue. N-linked (GlcNAc...) asparagine glycosylation is present at asparagine 502. Histidine 513 is an active-site residue.

This sequence belongs to the peptidase S10 family.

It is found in the vacuole. It catalyses the reaction Release of a C-terminal amino acid with broad specificity.. Its function is as follows. Vacuolar carboxypeptidase involved in degradation of small peptides. Digests preferentially peptides containing an aliphatic or hydrophobic residue in P1' position, as well as methionine, leucine or phenylalanine in P1 position of ester substrate. This chain is Carboxypeptidase Y homolog A (cpyA), found in Trichophyton rubrum (Athlete's foot fungus).